The following is a 303-amino-acid chain: MWFRSLAVSACTVGVLGALSQKFAPTALFHSAIRKSSLVEQSDMKVELLPALTDNYMYLLIDEETKEAAIVDPVEPQKVVDAVKKHGVKLKTVLTTHHHWDHAGGNEKLVKLMPGLTVYGGDDRVGALTQKVTHYNTFKVGSLNVKCLFTPCHTSGHICYFVTKENSTEAPAVFTGDTLFVAGCGKFFEGTADEMYKALIEVLGRLPPETRVYCGHEYTINNLKFARHVEPNNEVIRTKLAWAKEKYDNGEPTIPSTVAEEFTFNPFMRVREKSVLEHAGTSDPIEAMRSIRKEKDGFRVPKN.

Residues His-97, His-99, Asp-101, His-102, His-153, and Asp-177 each contribute to the Zn(2+) site. Residues 186–188 (KFF), 216–218 (HEY), and 292–295 (RKEK) contribute to the substrate site. Position 216 (His-216) interacts with Zn(2+).

The protein belongs to the metallo-beta-lactamase superfamily. Glyoxalase II family. Monomer. It depends on Zn(2+) as a cofactor.

The protein resides in the mitochondrion matrix. The protein localises to the cytoplasm. The catalysed reaction is an S-(2-hydroxyacyl)glutathione + H2O = a 2-hydroxy carboxylate + glutathione + H(+). The enzyme catalyses (R)-S-lactoylglutathione + H2O = (R)-lactate + glutathione + H(+). Thiolesterase that catalyzes the hydrolysis of S-D-lactoyl-glutathione to form glutathione and D-lactic acid. The polypeptide is Hydroxyacylglutathione hydrolase, mitochondrial (hagh) (Danio rerio (Zebrafish)).